A 232-amino-acid polypeptide reads, in one-letter code: Enolase-phosphatase E1 (232 aa).

Belongs to the HAD-like hydrolase superfamily. MasA/MtnC family. As to quaternary structure, monomer. Mg(2+) is required as a cofactor.

It catalyses the reaction 5-methylsulfanyl-2,3-dioxopentyl phosphate + H2O = 1,2-dihydroxy-5-(methylsulfanyl)pent-1-en-3-one + phosphate. It functions in the pathway amino-acid biosynthesis; L-methionine biosynthesis via salvage pathway; L-methionine from S-methyl-5-thio-alpha-D-ribose 1-phosphate: step 3/6. It participates in amino-acid biosynthesis; L-methionine biosynthesis via salvage pathway; L-methionine from S-methyl-5-thio-alpha-D-ribose 1-phosphate: step 4/6. In terms of biological role, bifunctional enzyme that catalyzes the enolization of 2,3-diketo-5-methylthiopentyl-1-phosphate (DK-MTP-1-P) into the intermediate 2-hydroxy-3-keto-5-methylthiopentenyl-1-phosphate (HK-MTPenyl-1-P), which is then dephosphorylated to form the acireductone 1,2-dihydroxy-3-keto-5-methylthiopentene (DHK-MTPene). In Xanthomonas euvesicatoria pv. vesicatoria (strain 85-10) (Xanthomonas campestris pv. vesicatoria), this protein is Enolase-phosphatase E1.